Consider the following 532-residue polypeptide: Protein kinase domain-containing protein ppk9 (532 aa).

Positions 23–274 (WLLGRTLGQG…VAEIMQHPWF (252 aa)) constitute a Protein kinase domain. ATP-binding positions include 29–37 (LGQGNLAKV) and Lys52. The Proton acceptor role is filled by Asp145. Residues 316-346 (PSSSVGQIPQPTDHSALSPSKPMSISGTESP) show a composition bias toward polar residues. A disordered region spans residues 316 to 349 (PSSSVGQIPQPTDHSALSPSKPMSISGTESPNPD).

It is found in the cytoplasm. It localises to the nucleus. The protein resides in the cytoskeleton. Its subcellular location is the microtubule organizing center. The protein localises to the spindle pole body. The chain is Protein kinase domain-containing protein ppk9 (ppk9) from Schizosaccharomyces pombe (strain 972 / ATCC 24843) (Fission yeast).